The chain runs to 71 residues: Small ribosomal subunit protein bS21 (71 aa).

Belongs to the bacterial ribosomal protein bS21 family.

This chain is Small ribosomal subunit protein bS21, found in Shewanella amazonensis (strain ATCC BAA-1098 / SB2B).